The sequence spans 567 residues: ETHYLENE INSENSITIVE 3-like 3 protein (567 aa).

Residues 24–44 (NVAEIDVSDEEIDADDLERRM) are a coiled coil. 2 disordered regions span residues 55–81 (KERQKAGSQGAQTKETPKKISDQAQRK) and 286–393 (IQQP…RNIL). Residues 69 to 79 (ETPKKISDQAQ) show a composition bias toward basic and acidic residues. Residues 162-288 (SQFVLQDLQD…LNQEESLIQQ (127 aa)) mediate DNA binding. Over residues 286 to 299 (IQQPSSDNGNSNVT) the composition is skewed to polar residues. Over residues 300 to 312 (ETHRRGNNADRRK) the composition is skewed to basic and acidic residues. The segment covering 363-372 (KHRRRKRPRI) has biased composition (basic residues).

Belongs to the EIN3 family. As to quaternary structure, interacts with MYB72.

The protein resides in the nucleus. Its function is as follows. Probable transcription factor that may be involved in the ethylene response pathway. This is ETHYLENE INSENSITIVE 3-like 3 protein (EIL3) from Arabidopsis thaliana (Mouse-ear cress).